The following is a 150-amino-acid chain: 6,7-dimethyl-8-ribityllumazine synthase (150 aa).

5-amino-6-(D-ribitylamino)uracil is bound by residues F11, 43–45 (VYD), and 67–69 (AVI). Residue 72-73 (AT) participates in (2S)-2-hydroxy-3-oxobutyl phosphate binding. The active-site Proton donor is the H75. Residue L100 participates in 5-amino-6-(D-ribitylamino)uracil binding. R115 is a (2S)-2-hydroxy-3-oxobutyl phosphate binding site.

It belongs to the DMRL synthase family.

The enzyme catalyses (2S)-2-hydroxy-3-oxobutyl phosphate + 5-amino-6-(D-ribitylamino)uracil = 6,7-dimethyl-8-(1-D-ribityl)lumazine + phosphate + 2 H2O + H(+). The protein operates within cofactor biosynthesis; riboflavin biosynthesis; riboflavin from 2-hydroxy-3-oxobutyl phosphate and 5-amino-6-(D-ribitylamino)uracil: step 1/2. Its function is as follows. Catalyzes the formation of 6,7-dimethyl-8-ribityllumazine by condensation of 5-amino-6-(D-ribitylamino)uracil with 3,4-dihydroxy-2-butanone 4-phosphate. This is the penultimate step in the biosynthesis of riboflavin. The sequence is that of 6,7-dimethyl-8-ribityllumazine synthase from Pyrobaculum aerophilum (strain ATCC 51768 / DSM 7523 / JCM 9630 / CIP 104966 / NBRC 100827 / IM2).